Reading from the N-terminus, the 206-residue chain is Large ribosomal subunit protein uL4 (206 aa).

A disordered region spans residues 63–93 (MYKQKGTGRARHHSARAPQFRGGGKAHGPVV). Residues 64 to 77 (YKQKGTGRARHHSA) show a composition bias toward basic residues.

It belongs to the universal ribosomal protein uL4 family. As to quaternary structure, part of the 50S ribosomal subunit.

Its function is as follows. One of the primary rRNA binding proteins, this protein initially binds near the 5'-end of the 23S rRNA. It is important during the early stages of 50S assembly. It makes multiple contacts with different domains of the 23S rRNA in the assembled 50S subunit and ribosome. Forms part of the polypeptide exit tunnel. This chain is Large ribosomal subunit protein uL4, found in Rhizobium meliloti (strain 1021) (Ensifer meliloti).